Here is a 720-residue protein sequence, read N- to C-terminus: Engulfment and cell motility protein 3 (720 aa).

The region spanning 307 to 479 (EQREQLQALR…VVREQLARTL (173 aa)) is the ELMO domain. Positions 541 to 663 (LRLCEGMLFR…WTDGLSALLG (123 aa)) constitute a PH domain.

As to quaternary structure, probably interacts directly with the SH3-domain of DOCK1 via its SH3-binding site. Part of a complex with DOCK1 and RAC1. Interacts with ADGRB3.

The protein resides in the cytoplasm. Its function is as follows. Involved in cytoskeletal rearrangements required for phagocytosis of apoptotic cells and cell motility. Acts in association with DOCK1 and CRK. Was initially proposed to be required in complex with DOCK1 to activate Rac Rho small GTPases. May enhance the guanine nucleotide exchange factor (GEF) activity of DOCK1. The chain is Engulfment and cell motility protein 3 (Elmo3) from Rattus norvegicus (Rat).